A 159-amino-acid chain; its full sequence is NADH-quinone oxidoreductase subunit I (159 aa).

4Fe-4S ferredoxin-type domains are found at residues 51–80 (RRYENGEERCIACKLCEAVCPAQAIVIESD) and 90–119 (TRYDIDMTKCIYCGLCQEACPVDAIVEGPN). Positions 60, 63, 66, 70, 99, 102, 105, and 109 each coordinate [4Fe-4S] cluster.

It belongs to the complex I 23 kDa subunit family. In terms of assembly, NDH-1 is composed of 14 different subunits. Subunits NuoA, H, J, K, L, M, N constitute the membrane sector of the complex. The cofactor is [4Fe-4S] cluster.

It localises to the cell inner membrane. It catalyses the reaction a quinone + NADH + 5 H(+)(in) = a quinol + NAD(+) + 4 H(+)(out). In terms of biological role, NDH-1 shuttles electrons from NADH, via FMN and iron-sulfur (Fe-S) centers, to quinones in the respiratory chain. The immediate electron acceptor for the enzyme in this species is believed to be ubiquinone. Couples the redox reaction to proton translocation (for every two electrons transferred, four hydrogen ions are translocated across the cytoplasmic membrane), and thus conserves the redox energy in a proton gradient. The sequence is that of NADH-quinone oxidoreductase subunit I from Rickettsia typhi (strain ATCC VR-144 / Wilmington).